The chain runs to 430 residues: Tol-Pal system protein TolB (430 aa).

An N-terminal signal peptide occupies residues 1 to 21 (MKQALRVAFGFLILWASVLHA).

Belongs to the TolB family. The Tol-Pal system is composed of five core proteins: the inner membrane proteins TolA, TolQ and TolR, the periplasmic protein TolB and the outer membrane protein Pal. They form a network linking the inner and outer membranes and the peptidoglycan layer.

The protein resides in the periplasm. Its function is as follows. Part of the Tol-Pal system, which plays a role in outer membrane invagination during cell division and is important for maintaining outer membrane integrity. TolB occupies a key intermediary position in the Tol-Pal system because it communicates directly with both membrane-embedded components, Pal in the outer membrane and TolA in the inner membrane. This Escherichia coli O8 (strain IAI1) protein is Tol-Pal system protein TolB.